A 414-amino-acid chain; its full sequence is 2-acylphloroglucinol 4-prenyltransferase (414 aa).

Residues 1-86 (MELSSVSSFS…LKPLSIFSCK (86 aa)) constitute a chloroplast transit peptide. The next 8 membrane-spanning stretches (helical) occupy residues 153 to 173 (FSWP…GSCF), 201 to 221 (ISVE…FILI), 229 to 249 (LLTS…VPPF), 256 to 276 (ITAF…VYYA), 281 to 301 (LGLA…ITFM), 336 to 356 (LLGT…AIIW), 359 to 379 (AFKS…LFFQ), and 394 to 414 (KSFY…YLFI).

The protein belongs to the UbiA prenyltransferase family. In terms of assembly, component an active demethylxanthohumol (DMX) biosynthetic metabolon in glandular trichomes (lupulin glands) that encompasses a chalcone synthase (CHS) and a membrane-bound prenyltransferase. Interacts with PT2, forming a functional metabolon. Interacts with CHIL2; this interaction promotes catalytic activity. Requires Mg(2+) as cofactor. As to expression, expressed in trichomes.

Its subcellular location is the plastid. The protein resides in the chloroplast membrane. It catalyses the reaction 2',4,4',6'-tetrahydroxychalcone + dimethylallyl diphosphate = desmethylxanthohumol + diphosphate. The enzyme catalyses a 2-acylphloroglucinol + dimethylallyl diphosphate = a 2-acyl-4-prenylphloroglucinol + diphosphate. The protein operates within secondary metabolite biosynthesis. Stimulated by CHIL2 but inhibited by CHIL1. In terms of biological role, involved in the biosynthesis of prenylated phenolics natural products which contribute to the bitter taste of beer and display broad biological activities. Catalyzes the first prenylation step in the beta-bitter acid pathway. Uses dimethylallyl diphosphate (DMAPP) as the prenyl donor. This is 2-acylphloroglucinol 4-prenyltransferase from Humulus lupulus (European hop).